The chain runs to 232 residues: MLRGVITDIDGTLTDEKRRLSTAAIETIRKLQEGGIEVVLSSGNTSCLLKGLCKLIGTGGTFIGENGGVYRIGFQGSMQVMANRDIAVKALNLLEEYYGKKGIRLELYSHQERYSDIAFAREVPVEEVRSLLSGWPVDIMDTNFAIHIHEAGIDKGRTFHIVAEQLGIKPDEFLGIGDSENDIGMIKAAGTGCCVANAQEDVRNISDYCSSVPYGEGFVEIMRMYFPHILAR.

Catalysis depends on Asp-8, which acts as the Nucleophile. Residues Asp-8 and Asp-10 each contribute to the Mg(2+) site. Substrate is bound at residue Lys-155. Mg(2+) contacts are provided by Asp-178 and Asp-182.

Belongs to the archaeal SPP-like hydrolase family. Mg(2+) serves as cofactor.

It catalyses the reaction 2-phosphoglycolate + H2O = glycolate + phosphate. In terms of biological role, catalyzes the dephosphorylation of 2-phosphoglycolate. This is Phosphoglycolate phosphatase from Methanospirillum hungatei JF-1 (strain ATCC 27890 / DSM 864 / NBRC 100397 / JF-1).